The sequence spans 116 residues: Protein Rev (116 aa).

Phosphoserine; by host CK2 is present on residues Ser5 and Ser8. Residues 18 to 26 (LIKFLYQSN) form a homomultimerization region. Positions 23–48 (YQSNPPPSPEGTRQARRNRRRRWRAR) are disordered. The Nuclear localization signal and RNA-binding (RRE) signature appears at 34–50 (TRQARRNRRRRWRARQR). The segment covering 36–48 (QARRNRRRRWRAR) has biased composition (basic residues). A Nuclear export signal and binding to XPO1 motif is present at residues 73–84 (LQLPPLERLNLN). The interval 90–116 (GTSGTQGVGSPQIPVEPPAVLESGTEE) is disordered. A phosphoserine; by host mark is found at Ser92 and Ser99.

Belongs to the HIV-1 REV protein family. Homomultimer; when bound to the RRE. Multimeric assembly is essential for activity and may involve XPO1. Binds to human KPNB1, XPO1, TNPO1, RANBP5 and IPO7. Interacts with the viral Integrase. Interacts with human KHDRBS1. Interacts with human NAP1; this interaction decreases Rev multimerization and stimulates its activity. Interacts with human DEAD-box helicases DDX3 and DDX24; these interactions may serve for viral RNA export to the cytoplasm and packaging, respectively. Interacts with human PSIP1; this interaction may inhibit HIV-1 DNA integration by promoting dissociation of the Integrase-LEDGF/p75 complex. Post-translationally, asymmetrically arginine dimethylated at one site by host PRMT6. Methylation impairs the RNA-binding activity and export of viral RNA from the nucleus to the cytoplasm. In terms of processing, phosphorylated by protein kinase CK2. Presence of, and maybe binding to the N-terminus of the regulatory beta subunit of CK2 is necessary for CK2-mediated Rev's phosphorylation.

It localises to the host nucleus. It is found in the host nucleolus. Its subcellular location is the host cytoplasm. Its function is as follows. Escorts unspliced or incompletely spliced viral pre-mRNAs (late transcripts) out of the nucleus of infected cells. These pre-mRNAs carry a recognition sequence called Rev responsive element (RRE) located in the env gene, that is not present in fully spliced viral mRNAs (early transcripts). This function is essential since most viral proteins are translated from unspliced or partially spliced pre-mRNAs which cannot exit the nucleus by the pathway used by fully processed cellular mRNAs. Rev itself is translated from a fully spliced mRNA that readily exits the nucleus. Rev's nuclear localization signal (NLS) binds directly to KPNB1/Importin beta-1 without previous binding to KPNA1/Importin alpha-1. KPNB1 binds to the GDP bound form of RAN (Ran-GDP) and targets Rev to the nucleus. In the nucleus, the conversion from Ran-GDP to Ran-GTP dissociates Rev from KPNB1 and allows Rev's binding to the RRE in viral pre-mRNAs. Rev multimerization on the RRE via cooperative assembly exposes its nuclear export signal (NES) to the surface. Rev can then form a complex with XPO1/CRM1 and Ran-GTP, leading to nuclear export of the complex. Conversion from Ran-GTP to Ran-GDP mediates dissociation of the Rev/RRE/XPO1/RAN complex, so that Rev can return to the nucleus for a subsequent round of export. Beside KPNB1, also seems to interact with TNPO1/Transportin-1, RANBP5/IPO5 and IPO7/RANBP7 for nuclear import. The nucleoporin-like HRB/RIP is an essential cofactor that probably indirectly interacts with Rev to release HIV RNAs from the perinuclear region to the cytoplasm. In Homo sapiens (Human), this protein is Protein Rev.